Here is a 185-residue protein sequence, read N- to C-terminus: Thymidine kinase (185 aa).

Residues 7–14 and 83–86 each bind ATP; these read GPMFAGKT and DEIQ. Glutamate 84 (proton acceptor) is an active-site residue. Zn(2+)-binding residues include cysteine 139, cysteine 142, cysteine 177, and histidine 180.

This sequence belongs to the thymidine kinase family. In terms of assembly, homotetramer.

The protein resides in the cytoplasm. It catalyses the reaction thymidine + ATP = dTMP + ADP + H(+). The polypeptide is Thymidine kinase (Pyrobaculum aerophilum (strain ATCC 51768 / DSM 7523 / JCM 9630 / CIP 104966 / NBRC 100827 / IM2)).